A 541-amino-acid chain; its full sequence is Glutamyl-tRNA(Gln) amidotransferase subunit B, mitochondrial (541 aa).

Belongs to the GatB/GatE family. GatB subfamily. In terms of assembly, subunit of the heterotrimeric GatFAB amidotransferase (AdT) complex, composed of A (HER2), B (PET112) and F (YGR102C) subunits.

The protein resides in the mitochondrion. The catalysed reaction is L-glutamyl-tRNA(Gln) + L-glutamine + ATP + H2O = L-glutaminyl-tRNA(Gln) + L-glutamate + ADP + phosphate + H(+). In terms of biological role, allows the formation of correctly charged Gln-tRNA(Gln) through the transamidation of misacylated Glu-tRNA(Gln) in the mitochondria. The reaction takes place in the presence of glutamine and ATP through an activated gamma-phospho-Glu-tRNA(Gln). In Saccharomyces cerevisiae (strain ATCC 204508 / S288c) (Baker's yeast), this protein is Glutamyl-tRNA(Gln) amidotransferase subunit B, mitochondrial.